Consider the following 257-residue polypeptide: Beta-fibrinogenase (257 aa).

An N-terminal signal peptide occupies residues 1–18 (MVLIRVLANLLLLQLSHA). Residues 19–24 (QKSSEL) constitute a propeptide that is removed on maturation. The region spanning 25–248 (VVGGDECNIN…YTDWIQSIIA (224 aa)) is the Peptidase S1 domain. Intrachain disulfides connect cysteine 31/cysteine 162, cysteine 49/cysteine 65, cysteine 97/cysteine 255, cysteine 141/cysteine 209, cysteine 173/cysteine 188, and cysteine 199/cysteine 224. An N-linked (GlcNAc...) asparagine glycan is attached at asparagine 44. Histidine 64 acts as the Charge relay system in catalysis. 2 N-linked (GlcNAc...) asparagine glycosylation sites follow: asparagine 78 and asparagine 102. The active-site Charge relay system is the aspartate 109. N-linked (GlcNAc...) asparagine glycans are attached at residues asparagine 153 and asparagine 169. Residue serine 203 is the Charge relay system of the active site. A glycan (N-linked (GlcNAc...) asparagine) is linked at asparagine 250.

Monomer. In terms of processing, glycosylated. Contains 23.0% of hexoses, 8.3% of hexosamines and 1.0% of sialic acids. As to expression, expressed by the venom gland.

The protein resides in the secreted. With respect to regulation, inhibited by diisopropylfluorophosphate (DFP) and PMSF. Its function is as follows. Snake venom serine protease that has fibrinogenolytic activities by hydrolyzing the beta chain of fibrinogen (FGB). Typical arginine esterase which hydrolyzes esters and amides of arginine. The polypeptide is Beta-fibrinogenase (Macrovipera lebetinus (Levantine viper)).